The sequence spans 429 residues: Citrate synthase, plasmid (429 aa).

Residues His-306 and Asp-364 contribute to the active site.

The protein belongs to the citrate synthase family.

It carries out the reaction oxaloacetate + acetyl-CoA + H2O = citrate + CoA + H(+). It participates in carbohydrate metabolism; tricarboxylic acid cycle; isocitrate from oxaloacetate: step 1/2. In terms of biological role, the exact function of the plasmid-encoded citrate synthase is not clear, it could help nodulation by allowing the bacteria to use citrate as a chelator of iron and calcium. This is Citrate synthase, plasmid (pcsA) from Rhizobium tropici.